Here is a 396-residue protein sequence, read N- to C-terminus: MSRPQQITVLGATGSIGLSTLDVIARHPDRYQAFALSGFTRLSELFALCVRHLPEYAVVPEAGAARNLQDDLRAAGLSTQVLVGEEGLCQVAAAPEVDAVMAAIVGAAGLRPTLAAVEAGKKILLANKEALVMSGALFMQAVRKSGSVLLPIDSEHNAIFQCMPQDFARGLSNVGVRRILLTASGGPFRQTPMAELAHVSPDQACAHPNWSMGRKISVDSASMMNKGLELIEACWLFDAKPSQVEVVIHPQSVIHSLVDYVDGSVLAQLGNPDMRTPIANALAWPERIDSGVAPLDLFAVARLDFEAPDEERFPCLRLARQAAEAGNSAPAMLNAANEVAVAAFLDGRVRYLEIASIIEEVLNLEPVVALDNLDAVFAADATARTLAGQWLSRNGR.

NADPH-binding residues include Thr13, Gly14, Ser15, Ile16, and Asn127. Lys128 is a 1-deoxy-D-xylulose 5-phosphate binding site. Glu129 is an NADPH binding site. Mn(2+) is bound at residue Asp153. The 1-deoxy-D-xylulose 5-phosphate site is built by Ser154, Glu155, Ser184, and His207. Position 155 (Glu155) interacts with Mn(2+). Residue Gly213 participates in NADPH binding. 1-deoxy-D-xylulose 5-phosphate contacts are provided by Ser220, Asn225, Lys226, and Glu229. Glu229 lines the Mn(2+) pocket.

The protein belongs to the DXR family. Mg(2+) serves as cofactor. Mn(2+) is required as a cofactor.

The enzyme catalyses 2-C-methyl-D-erythritol 4-phosphate + NADP(+) = 1-deoxy-D-xylulose 5-phosphate + NADPH + H(+). It functions in the pathway isoprenoid biosynthesis; isopentenyl diphosphate biosynthesis via DXP pathway; isopentenyl diphosphate from 1-deoxy-D-xylulose 5-phosphate: step 1/6. Catalyzes the NADPH-dependent rearrangement and reduction of 1-deoxy-D-xylulose-5-phosphate (DXP) to 2-C-methyl-D-erythritol 4-phosphate (MEP). In Pseudomonas fluorescens (strain Pf0-1), this protein is 1-deoxy-D-xylulose 5-phosphate reductoisomerase.